Consider the following 417-residue polypeptide: Synaptic vesicle membrane protein VAT-1 homolog-like (417 aa).

2 disordered regions span residues 1–33 (MAKE…GSHR) and 382–417 (PTPL…PFIQ). Residue S390 is modified to Phosphoserine. 2 positions are modified to phosphothreonine: T391 and T393. S394 carries the phosphoserine modification. The span at 395 to 405 (EAGEEEEDHEG) shows a compositional bias: acidic residues. Over residues 406 to 417 (DSENKERMPFIQ) the composition is skewed to basic and acidic residues.

Belongs to the zinc-containing alcohol dehydrogenase family. Quinone oxidoreductase subfamily.

The polypeptide is Synaptic vesicle membrane protein VAT-1 homolog-like (Vat1l) (Mus musculus (Mouse)).